The following is a 432-amino-acid chain: Adenylosuccinate synthetase (432 aa).

GTP contacts are provided by residues 13-19 (GDEGKGK) and 41-43 (GHT). The active-site Proton acceptor is the D14. The Mg(2+) site is built by D14 and G41. IMP contacts are provided by residues 14–17 (DEGK), 39–42 (NAGH), T130, R144, Q225, T240, and R304. The Proton donor role is filled by H42. 300-306 (ATTGRKR) serves as a coordination point for substrate. Residues R306, 332-334 (KLD), and 415-417 (STG) contribute to the GTP site.

The protein belongs to the adenylosuccinate synthetase family. As to quaternary structure, homodimer. Mg(2+) serves as cofactor.

The protein resides in the cytoplasm. The enzyme catalyses IMP + L-aspartate + GTP = N(6)-(1,2-dicarboxyethyl)-AMP + GDP + phosphate + 2 H(+). Its pathway is purine metabolism; AMP biosynthesis via de novo pathway; AMP from IMP: step 1/2. Its function is as follows. Plays an important role in the de novo pathway of purine nucleotide biosynthesis. Catalyzes the first committed step in the biosynthesis of AMP from IMP. This Tolumonas auensis (strain DSM 9187 / NBRC 110442 / TA 4) protein is Adenylosuccinate synthetase.